A 574-amino-acid polypeptide reads, in one-letter code: Septation ring formation regulator EzrA (574 aa).

At 1-7 the chain is on the extracellular side; the sequence is MPTGTII. Residues 8–26 traverse the membrane as a helical segment; sequence LIVSIVIILIIAYVACLIV. The Cytoplasmic portion of the chain corresponds to 27 to 574; the sequence is RKRNDNLLVA…YEKTREAIRY (548 aa). A coiled-coil region spans residues 105-189; it reads SAKNAIDSID…IEVEFSEFVM (85 aa).

Belongs to the EzrA family.

Its subcellular location is the cell membrane. In terms of biological role, negative regulator of FtsZ ring formation; modulates the frequency and position of FtsZ ring formation. Inhibits FtsZ ring formation at polar sites. Interacts either with FtsZ or with one of its binding partners to promote depolymerization. The chain is Septation ring formation regulator EzrA from Streptococcus suis (strain 98HAH33).